The following is a 66-amino-acid chain: Large ribosomal subunit protein uL29 (66 aa).

Belongs to the universal ribosomal protein uL29 family.

This is Large ribosomal subunit protein uL29 from Rhizobium meliloti (strain 1021) (Ensifer meliloti).